A 199-amino-acid chain; its full sequence is Shikimate kinase (199 aa).

14-19 serves as a coordination point for ATP; sequence GSGKST. Mg(2+) is bound at residue Ser18. Asp36, Arg60, and Gly82 together coordinate substrate. ATP is bound at residue Arg120. Residue Arg147 coordinates substrate.

Belongs to the shikimate kinase family. In terms of assembly, monomer. Requires Mg(2+) as cofactor.

It is found in the cytoplasm. It carries out the reaction shikimate + ATP = 3-phosphoshikimate + ADP + H(+). The protein operates within metabolic intermediate biosynthesis; chorismate biosynthesis; chorismate from D-erythrose 4-phosphate and phosphoenolpyruvate: step 5/7. Its function is as follows. Catalyzes the specific phosphorylation of the 3-hydroxyl group of shikimic acid using ATP as a cosubstrate. In Chlorobium limicola (strain DSM 245 / NBRC 103803 / 6330), this protein is Shikimate kinase.